The following is a 355-amino-acid chain: Peptide chain release factor 1 (355 aa).

At glutamine 231 the chain carries N5-methylglutamine. A compositionally biased stretch (basic and acidic residues) spans 280-291; it reads SERLAKESEARK. The interval 280–303 is disordered; that stretch reads SERLAKESEARKSQVGSGDRSERI.

It belongs to the prokaryotic/mitochondrial release factor family. In terms of processing, methylated by PrmC. Methylation increases the termination efficiency of RF1.

It is found in the cytoplasm. Its function is as follows. Peptide chain release factor 1 directs the termination of translation in response to the peptide chain termination codons UAG and UAA. This is Peptide chain release factor 1 from Campylobacter jejuni subsp. jejuni serotype O:2 (strain ATCC 700819 / NCTC 11168).